Reading from the N-terminus, the 632-residue chain is Signal-transduction and transcriptional-control protein (632 aa).

The PAS domain occupies 197–270 (TYQYLNKITD…GQSYEDEEIM (74 aa)). The Sigma-54 factor interaction domain occupies 324 to 554 (IIGQSEAMKR…LENCIENIVN (231 aa)). Residues 352–359 (GESGTGKE) and 416–425 (ANEGTLFLDE) each bind ATP. Positions 606-625 (ISKACRILGINRSTLYIKIK) form a DNA-binding region, H-T-H motif.

The chain is Signal-transduction and transcriptional-control protein (stc) from Clostridium beijerinckii (Clostridium MP).